A 125-amino-acid polypeptide reads, in one-letter code: Ribosome-binding factor A (125 aa).

This sequence belongs to the RbfA family. In terms of assembly, monomer. Binds 30S ribosomal subunits, but not 50S ribosomal subunits or 70S ribosomes.

Its subcellular location is the cytoplasm. One of several proteins that assist in the late maturation steps of the functional core of the 30S ribosomal subunit. Associates with free 30S ribosomal subunits (but not with 30S subunits that are part of 70S ribosomes or polysomes). Required for efficient processing of 16S rRNA. May interact with the 5'-terminal helix region of 16S rRNA. The chain is Ribosome-binding factor A from Xylella fastidiosa (strain M23).